A 293-amino-acid polypeptide reads, in one-letter code: Formamidopyrimidine-DNA glycosylase (293 aa).

The active-site Schiff-base intermediate with DNA is the P2. The Proton donor role is filled by E3. The active-site Proton donor; for beta-elimination activity is the K58. 3 residues coordinate DNA: H104, R127, and R170. The FPG-type zinc-finger motif lies at 257–293 (SVYGREGKPCRNPACGGTVERVVQSGRSTFFCASCQT). The active-site Proton donor; for delta-elimination activity is the R283.

The protein belongs to the FPG family. In terms of assembly, monomer. It depends on Zn(2+) as a cofactor.

It carries out the reaction Hydrolysis of DNA containing ring-opened 7-methylguanine residues, releasing 2,6-diamino-4-hydroxy-5-(N-methyl)formamidopyrimidine.. The enzyme catalyses 2'-deoxyribonucleotide-(2'-deoxyribose 5'-phosphate)-2'-deoxyribonucleotide-DNA = a 3'-end 2'-deoxyribonucleotide-(2,3-dehydro-2,3-deoxyribose 5'-phosphate)-DNA + a 5'-end 5'-phospho-2'-deoxyribonucleoside-DNA + H(+). Its function is as follows. Involved in base excision repair of DNA damaged by oxidation or by mutagenic agents. Acts as a DNA glycosylase that recognizes and removes damaged bases. Has a preference for oxidized purines, such as 7,8-dihydro-8-oxoguanine (8-oxoG). Has AP (apurinic/apyrimidinic) lyase activity and introduces nicks in the DNA strand. Cleaves the DNA backbone by beta-delta elimination to generate a single-strand break at the site of the removed base with both 3'- and 5'-phosphates. The chain is Formamidopyrimidine-DNA glycosylase from Brucella ovis (strain ATCC 25840 / 63/290 / NCTC 10512).